The following is a 182-amino-acid chain: UPF0397 protein SPG_0438 (182 aa).

Helical transmembrane passes span 10-30, 46-66, 73-93, 109-129, and 148-168; these read VVAVGIGAALFVVIGMINIPT, LLSIIFGPIIGLLVGLIGHAI, YGLWWTWIIASGLFGLVVGLF, ILIFNLIQLLANALVWGVLAP, and IVAGIANGVSVAIAGTLLLLA.

It belongs to the UPF0397 family.

It localises to the cell membrane. The polypeptide is UPF0397 protein SPG_0438 (Streptococcus pneumoniae serotype 19F (strain G54)).